We begin with the raw amino-acid sequence, 185 residues long: Ribosome-recycling factor (185 aa).

The protein belongs to the RRF family.

The protein localises to the cytoplasm. In terms of biological role, responsible for the release of ribosomes from messenger RNA at the termination of protein biosynthesis. May increase the efficiency of translation by recycling ribosomes from one round of translation to another. The polypeptide is Ribosome-recycling factor (Streptococcus agalactiae serotype V (strain ATCC BAA-611 / 2603 V/R)).